A 63-amino-acid polypeptide reads, in one-letter code: Large ribosomal subunit protein uL29 (63 aa).

Belongs to the universal ribosomal protein uL29 family.

This Proteus mirabilis (strain HI4320) protein is Large ribosomal subunit protein uL29.